Here is a 34-residue protein sequence, read N- to C-terminus: Calcitonin-like peptide 1 (34 aa).

Cysteine 2 and cysteine 7 are oxidised to a cystine. Position 34 is a proline amide (proline 34).

The polypeptide is Calcitonin-like peptide 1 (Odorrana schmackeri (Schmacker's frog)).